Here is a 402-residue protein sequence, read N- to C-terminus: Zinc finger protein 587B (402 aa).

The region spanning 15–91 is the KRAB domain; it reads VTFEDVAVKF…PVTGVSPKKA (77 aa). The segment at 92–114 adopts a C2H2-type 1 zinc-finger fold; the sequence is HPCEMCGPILGDILHVADHQGTH. A C2H2-type 2; degenerate zinc finger spans residues 120 to 142; the sequence is HRCEAWGNKLYDSGNFHQHQNEH. Glycyl lysine isopeptide (Lys-Gly) (interchain with G-Cter in SUMO2) cross-links involve residues Lys177, Lys200, and Lys253. 5 consecutive C2H2-type zinc fingers follow at residues 242–264, 270–292, 298–320, 326–348, and 354–383; these read YVCCECGKSFSKYVSFSNHQRVH, YECGECEKSFSQKSSLIQHQQFH, YGCEECGKYFSLEGYLRRHQKVH, YECGECGKSFSSNVNLKSHQRIH, and YKCGECEKSFSRKPSLSYHQRFGRPRWVDH. A Glycyl lysine isopeptide (Lys-Gly) (interchain with G-Cter in SUMO2) cross-link involves residue Lys366.

This sequence belongs to the krueppel C2H2-type zinc-finger protein family.

The protein resides in the nucleus. May be involved in transcriptional regulation. In Homo sapiens (Human), this protein is Zinc finger protein 587B (ZNF587B).